Reading from the N-terminus, the 422-residue chain is UPF0761 membrane protein Paes_1471 (422 aa).

6 helical membrane-spanning segments follow: residues 47-67 (LLSI…SPVF), 103-123 (SVPT…ISTI), 143-163 (FTLY…SLVA), 185-205 (LLLL…ILVP), 208-228 (KVKF…FEFS), and 247-267 (GALS…VVAL).

The protein belongs to the UPF0761 family.

The protein resides in the cell inner membrane. This chain is UPF0761 membrane protein Paes_1471, found in Prosthecochloris aestuarii (strain DSM 271 / SK 413).